The following is a 780-amino-acid chain: Vezatin (780 aa).

2 helical membrane-spanning segments follow: residues 140–160 (ATPNTWDVSLLFAFISLLIMF) and 162–182 (TCWIVSSWLVWGIILFLYLII). Positions 430–467 (VRSLQLHLKALLNEVIILEDELEKLVCTKETQELLSEA) form a coiled coil. Disordered stretches follow at residues 620–718 (DPVE…PRDT) and 757–780 (QEQTFGDEEEEQLVEGGENEVEEK). The span at 624–643 (SVSNSEPPMNSDTEKVNSNA) shows a compositional bias: polar residues. Composition is skewed to basic and acidic residues over residues 647 to 663 (ETSKPCAGDKEDSRTEY) and 690 to 699 (TMCHQHESEA). Residues 702 to 711 (PQAAAAGATA) show a composition bias toward low complexity. The span at 761 to 780 (FGDEEEEQLVEGGENEVEEK) shows a compositional bias: acidic residues.

It belongs to the vezatin family. In terms of assembly, interacts with USH2A (via the cytoplasmic region); the interaction associates VEZT with the USH2 complex at the stereocilia base. Interacts with myosin MYO7A and the cadherin-catenins complex. As to expression, expressed in developing cochlear hair cells. Isoform 1, isoform 2 and isoform 3 are expressed in testis. In the seminiferous epithelium, present exclusively in the acrosome of spermatids (at protein level).

The protein resides in the cell membrane. It localises to the cell projection. Its subcellular location is the stereocilium membrane. It is found in the cell junction. The protein localises to the adherens junction. The protein resides in the nucleus. It localises to the cytoplasmic vesicle. Its subcellular location is the secretory vesicle. It is found in the acrosome. Functionally, plays a pivotal role in the establishment of adherens junctions and their maintenance in adult life. Required for morphogenesis of the preimplantation embryo, and for the implantation process. This is Vezatin from Mus musculus (Mouse).